We begin with the raw amino-acid sequence, 834 residues long: Meiotic sister-chromatid recombination protein 3 (834 aa).

4 disordered regions span residues 75–136, 251–291, 343–378, and 458–479; these read PAAA…QPRT, EETE…TGSL, RKLAQPQQGQNQRRTVSFTQGSIDHMNTTKKKKQPL, and VRRSKSMTGSAVPPQAGKKKLT. Positions 343–368 are enriched in polar residues; sequence RKLAQPQQGQNQRRTVSFTQGSIDHM.

It localises to the cell membrane. Functionally, may be involved in the control of meiotic sister-chromatid recombination. This Candida glabrata (strain ATCC 2001 / BCRC 20586 / JCM 3761 / NBRC 0622 / NRRL Y-65 / CBS 138) (Yeast) protein is Meiotic sister-chromatid recombination protein 3 (MSC3).